The following is a 321-amino-acid chain: UDP-3-O-acylglucosamine N-acyltransferase (321 aa).

The active-site Proton acceptor is H231.

Belongs to the transferase hexapeptide repeat family. LpxD subfamily. As to quaternary structure, homotrimer.

It catalyses the reaction a UDP-3-O-[(3R)-3-hydroxyacyl]-alpha-D-glucosamine + a (3R)-hydroxyacyl-[ACP] = a UDP-2-N,3-O-bis[(3R)-3-hydroxyacyl]-alpha-D-glucosamine + holo-[ACP] + H(+). It functions in the pathway bacterial outer membrane biogenesis; LPS lipid A biosynthesis. Its function is as follows. Catalyzes the N-acylation of UDP-3-O-acylglucosamine using 3-hydroxyacyl-ACP as the acyl donor. Is involved in the biosynthesis of lipid A, a phosphorylated glycolipid that anchors the lipopolysaccharide to the outer membrane of the cell. This Campylobacter jejuni subsp. jejuni serotype O:2 (strain ATCC 700819 / NCTC 11168) protein is UDP-3-O-acylglucosamine N-acyltransferase.